The following is a 103-amino-acid chain: Small ribosomal subunit protein uS10 (103 aa).

It belongs to the universal ribosomal protein uS10 family. Part of the 30S ribosomal subunit.

Functionally, involved in the binding of tRNA to the ribosomes. This Shewanella loihica (strain ATCC BAA-1088 / PV-4) protein is Small ribosomal subunit protein uS10.